A 287-amino-acid polypeptide reads, in one-letter code: Large ribosomal subunit protein uL2 (287 aa).

The interval 221-287 (RGSVMNPCDH…SKRSRGGRDS (67 aa)) is disordered. Residues 258 to 287 (KTRKKNKPSNKLVVRRRRRISKRSRGGRDS) show a composition bias toward basic residues.

Belongs to the universal ribosomal protein uL2 family. Part of the 50S ribosomal subunit. Forms a bridge to the 30S subunit in the 70S ribosome.

Its function is as follows. One of the primary rRNA binding proteins. Required for association of the 30S and 50S subunits to form the 70S ribosome, for tRNA binding and peptide bond formation. It has been suggested to have peptidyltransferase activity; this is somewhat controversial. Makes several contacts with the 16S rRNA in the 70S ribosome. In Prochlorococcus marinus subsp. pastoris (strain CCMP1986 / NIES-2087 / MED4), this protein is Large ribosomal subunit protein uL2.